The chain runs to 424 residues: Microcin H47 secretion protein MchE (424 aa).

The Cytoplasmic segment spans residues 1-25; sequence MFRQDALENRKMKWQGRAILLPGIP. Residues 26 to 46 form a helical membrane-spanning segment; that stretch reads LWLIMLGSIVFITAFLMFIIV. At 47 to 424 the chain is on the periplasmic side; it reads GTYSRRVNVS…KHSATGPLND (378 aa).

This sequence belongs to the membrane fusion protein (MFP) (TC 8.A.1) family.

It localises to the cell inner membrane. Functionally, probably involved, in conjunction with MchF, in the secretion of microcin H47. The sequence is that of Microcin H47 secretion protein MchE (mchE) from Escherichia coli.